The chain runs to 2395 residues: Helicase ssl-1 (2395 aa).

A compositionally biased stretch (low complexity) spans 1–12 (MPATPVRASSTR). A disordered region spans residues 1-62 (MPATPVRASS…EKKKKKTSDD (62 aa)). Residues 227–300 (LPKCVEPERN…IKEKRKMCAG (74 aa)) enclose the HSA domain. A compositionally biased stretch (polar residues) spans 354–363 (LVSSSKSPSI). Disordered stretches follow at residues 354-404 (LVSS…VRQE) and 444-504 (EKLE…HGVL). Basic and acidic residues-rich tracts occupy residues 365 to 375 (SDRDDKDEEFK), 394 to 404 (KSQKKEDVRQE), and 444 to 462 (EKLE…NEEK). The stretch at 388 to 464 (TIANAEKSQK…ACGDNEEKME (77 aa)) forms a coiled coil. Over residues 470–490 (SSDAQKPSTSSSDLTAEQLQD) the composition is skewed to polar residues. The 166-residue stretch at 570-735 (VTLYEKNLNG…WSLMHFLMPT (166 aa)) folds into the Helicase ATP-binding domain. ATP is bound at residue 583–590 (DEMGLGKT). Residues 963-982 (AQPLQNGNSIPQNAPNRPQT) are disordered. One can recognise a Helicase C-terminal domain in the interval 1196-1342 (LLRQLYLYKH…ELAIDEAGFT (147 aa)). Positions 1452–1476 (KPEFEEECKEAEALIDQKREEWDKN) form a coiled coil. 5 disordered regions span residues 1615-1706 (ESAA…EEPD), 1977-2073 (SIQH…RRNA), 2092-2143 (QSGK…PQQR), 2276-2306 (QMRS…RPLV), and 2350-2395 (MQMP…PPQN). 2 stretches are compositionally biased toward low complexity: residues 1647-1669 (QQPT…QQQQ) and 1981-1995 (LQSS…QNLQ). Over residues 1996-2019 (NSHNSEQRNNVQNMHQNQYNSSQN) the composition is skewed to polar residues. 2 stretches are compositionally biased toward low complexity: residues 2051 to 2073 (LVQQ…RRNA) and 2092 to 2114 (QSGK…SSND). The segment covering 2115–2129 (GQGGASTVGGGGGGS) has biased composition (gly residues). A compositionally biased stretch (low complexity) spans 2130-2142 (QQPHQQQQQQPQQ). The segment covering 2281-2299 (NGGGVGGQGGLQGGPGGPQ) has biased composition (gly residues). Residues 2361–2377 (QQQAPPQSSQQASQQAP) show a composition bias toward low complexity.

It belongs to the SNF2/RAD54 helicase family. SWR1 subfamily.

The protein resides in the nucleus. Its function is as follows. Probable catalytic component of a chromatin-remodeling complex which mediates the ATP-dependent exchange of histone H2A variant H2AV/htz-1 for H2A, leading to transcriptional regulation of selected genes by chromatin remodeling. Involved in foregut development, and may be involved in vulval development. The polypeptide is Helicase ssl-1 (ssl-1) (Caenorhabditis elegans).